Here is a 532-residue protein sequence, read N- to C-terminus: Ankyrin repeat-containing protein At2g01680 (532 aa).

7 ANK repeats span residues 9 to 38 (LTHQAFFSSVRSGDLSQLQQLVDNLTGDEL), 58 to 89 (AGETAVYISAAENLEDIFRYLIRFSSLETVKI), 93 to 122 (SDMNAFHVAAKRGHLGIVKELLRLWPELCR), 127 to 156 (SNTSPLYAAAVQDHLEIVNAMLDVDPSCAM), 161 to 190 (NGKTSLHTAGRYGLLRIVKALIEKDAAIVG), 195 to 224 (KGQTALHMAVKGRSLEVVEEILQADYTILN), and 229 to 259 (KGNTALHIATRKARPQITSLLLTFTAIEVNA). 4 helical membrane passes run 354-374 (ITVVAVLFASIAFLAIFNLPG), 396-416 (VFCLLNATSLFISLAVVVVQI), 436-456 (LMWAACACTFGAFLAIAFAVV), and 467-487 (ITLLGAPILVGTLASMCYFVF).

The protein resides in the membrane. This Arabidopsis thaliana (Mouse-ear cress) protein is Ankyrin repeat-containing protein At2g01680.